The primary structure comprises 180 residues: Probable Brix domain-containing ribosomal biogenesis protein (180 aa).

In terms of domain architecture, Brix spans 1-178; it reads MTTSRRPSPR…KPAEMVKRGR (178 aa).

Its function is as follows. Probably involved in the biogenesis of the ribosome. The chain is Probable Brix domain-containing ribosomal biogenesis protein from Aeropyrum pernix (strain ATCC 700893 / DSM 11879 / JCM 9820 / NBRC 100138 / K1).